The sequence spans 103 residues: Growth-regulated alpha protein (103 aa).

Positions 1–30 (MARAANPAPRLLGAAMLLLLLVAAGRRAAG) are cleaved as a signal peptide. 2 disulfide bridges follow: C39–C65 and C41–C81.

The protein belongs to the intercrine alpha (chemokine CxC) family.

The protein localises to the secreted. Functionally, has chemotactic activity for neutrophils. The chain is Growth-regulated alpha protein (CXCL1) from Ovis aries (Sheep).